Consider the following 1176-residue polypeptide: Pesticidal crystal protein Cry1Ag (1176 aa).

It belongs to the delta endotoxin family.

Functionally, promotes colloidosmotic lysis by binding to the midgut epithelial cells of many lepidopteran larvae. This is Pesticidal crystal protein Cry1Ag (cry1Ag) from Bacillus thuringiensis.